A 471-amino-acid polypeptide reads, in one-letter code: Putative multidrug resistance protein MdtD (471 aa).

The next 13 helical transmembrane spans lie at 12-32 (LWIV…VNTA), 49-69 (MIIV…GWLA), 77-97 (IFFT…QAST), 102-124 (VMAR…LTVM), 138-158 (FVTL…GVLV), 165-185 (WIFL…LCLM), 195-215 (FDLS…LALD), 220-240 (LGIS…ALLL), 263-283 (FSLG…LPFM), 286-306 (VFLQ…MIPM), 329-351 (VLVA…ALAG), 393-413 (LLSM…GLLL), and 431-451 (VFLY…LIFS).

This sequence belongs to the major facilitator superfamily. TCR/Tet family.

The protein localises to the cell inner membrane. This is Putative multidrug resistance protein MdtD from Klebsiella pneumoniae subsp. pneumoniae (strain ATCC 700721 / MGH 78578).